The chain runs to 65 residues: Toxin Co52 (65 aa).

One can recognise an LCN-type CS-alpha/beta domain in the interval 2 to 65 (EDGYLVDKTG…PTWPLPNKTC (64 aa)). Intrachain disulfides connect Cys-12/Cys-65, Cys-16/Cys-41, Cys-25/Cys-46, and Cys-29/Cys-48.

As to expression, expressed by the venom gland.

The protein localises to the secreted. In terms of biological role, beta toxins bind voltage-independently at site-4 of sodium channels (Nav) and shift the voltage of activation toward more negative potentials thereby affecting sodium channel activation and promoting spontaneous and repetitive firing. Not toxic to mice, chicks, crickets or woodlice (at 5 ug). The protein is Toxin Co52 of Centruroides ornatus (Scorpion).